A 331-amino-acid polypeptide reads, in one-letter code: Autoinducer 2 import system permease protein LsrC (331 aa).

Helical transmembrane passes span 14–34 (LIAI…YFSL), 39–59 (LVFS…LVML), 70–90 (IAGL…NLPV), 93–113 (LLTL…VTWL), 115–135 (IPAI…MLLL), 157–177 (LNIS…AWIL), 206–226 (IQII…IVFA), 252–272 (GISL…AFFL), and 284–304 (LPAW…LIFD).

Belongs to the binding-protein-dependent transport system permease family. AraH/RbsC subfamily. As to quaternary structure, the complex is composed of two ATP-binding proteins (LsrA), two transmembrane proteins (LsrC and LsrD) and a solute-binding protein (LsrB).

It localises to the cell inner membrane. In terms of biological role, part of the ABC transporter complex LsrABCD involved in autoinducer 2 (AI-2) import. Probably responsible for the translocation of the substrate across the membrane. The sequence is that of Autoinducer 2 import system permease protein LsrC (lsrC) from Photorhabdus luminescens (Xenorhabdus luminescens).